A 703-amino-acid polypeptide reads, in one-letter code: Fanconi-associated nuclease 1 homolog (703 aa).

Positions 529, 651, 666, and 667 each coordinate Mn(2+). The region spanning 597 to 698 (YIREHQRKTF…EVDVEVCHVS (102 aa)) is the VRR-NUC domain.

Belongs to the FAN1 family. Requires Mn(2+) as cofactor. The cofactor is Mg(2+).

The protein localises to the nucleus. The catalysed reaction is Hydrolytically removes 5'-nucleotides successively from the 3'-hydroxy termini of 3'-hydroxy-terminated oligonucleotides.. Functionally, nuclease required for the repair of DNA interstrand cross-links (ICL). Acts as a 5'-3' exonuclease that anchors at a cut end of DNA and cleaves DNA successively at every third nucleotide, allowing to excise an ICL from one strand through flanking incisions. The polypeptide is Fanconi-associated nuclease 1 homolog (Schizosaccharomyces pombe (strain 972 / ATCC 24843) (Fission yeast)).